A 194-amino-acid polypeptide reads, in one-letter code: Fimbrial protein 987P (194 aa).

Positions 1-23 (MRMKKSALTLAVLSSLFSGYSLA) are cleaved as a signal peptide. Cys46 and Cys85 form a disulfide bridge.

It belongs to the fimbrial protein family.

It localises to the fimbrium. This is Fimbrial protein 987P (fasA) from Escherichia coli.